Consider the following 344-residue polypeptide: S-adenosylmethionine:tRNA ribosyltransferase-isomerase (344 aa).

The protein belongs to the QueA family. Monomer.

The protein localises to the cytoplasm. The catalysed reaction is 7-aminomethyl-7-carbaguanosine(34) in tRNA + S-adenosyl-L-methionine = epoxyqueuosine(34) in tRNA + adenine + L-methionine + 2 H(+). Its pathway is tRNA modification; tRNA-queuosine biosynthesis. In terms of biological role, transfers and isomerizes the ribose moiety from AdoMet to the 7-aminomethyl group of 7-deazaguanine (preQ1-tRNA) to give epoxyqueuosine (oQ-tRNA). This Acinetobacter baylyi (strain ATCC 33305 / BD413 / ADP1) protein is S-adenosylmethionine:tRNA ribosyltransferase-isomerase.